Here is a 237-residue protein sequence, read N- to C-terminus: Phosphoribosylaminoimidazole-succinocarboxamide synthase (237 aa).

Belongs to the SAICAR synthetase family.

It carries out the reaction 5-amino-1-(5-phospho-D-ribosyl)imidazole-4-carboxylate + L-aspartate + ATP = (2S)-2-[5-amino-1-(5-phospho-beta-D-ribosyl)imidazole-4-carboxamido]succinate + ADP + phosphate + 2 H(+). It participates in purine metabolism; IMP biosynthesis via de novo pathway; 5-amino-1-(5-phospho-D-ribosyl)imidazole-4-carboxamide from 5-amino-1-(5-phospho-D-ribosyl)imidazole-4-carboxylate: step 1/2. This Enterobacter sp. (strain 638) protein is Phosphoribosylaminoimidazole-succinocarboxamide synthase.